We begin with the raw amino-acid sequence, 272 residues long: Small ribosomal subunit protein mS23 (272 aa).

Residues 233–272 (KENASKAAGDASAVSSEKQVEDDVVNFDESTDADQEVLHF) are disordered. The span at 252 to 272 (VEDDVVNFDESTDADQEVLHF) shows a compositional bias: acidic residues.

It belongs to the mitochondrion-specific ribosomal protein mS23 family. As to quaternary structure, component of the mitochondrial small ribosomal subunit.

Its subcellular location is the mitochondrion. The protein is Small ribosomal subunit protein mS23 (RSM25) of Candida glabrata (strain ATCC 2001 / BCRC 20586 / JCM 3761 / NBRC 0622 / NRRL Y-65 / CBS 138) (Yeast).